The following is a 293-amino-acid chain: Elongation factor Ts (293 aa).

Residues Thr-80–Val-83 form an involved in Mg(2+) ion dislocation from EF-Tu region.

It belongs to the EF-Ts family.

Its subcellular location is the cytoplasm. Functionally, associates with the EF-Tu.GDP complex and induces the exchange of GDP to GTP. It remains bound to the aminoacyl-tRNA.EF-Tu.GTP complex up to the GTP hydrolysis stage on the ribosome. In Burkholderia cenocepacia (strain ATCC BAA-245 / DSM 16553 / LMG 16656 / NCTC 13227 / J2315 / CF5610) (Burkholderia cepacia (strain J2315)), this protein is Elongation factor Ts.